Reading from the N-terminus, the 578-residue chain is A-type ATP synthase subunit A (578 aa).

Residue 228 to 235 coordinates ATP; that stretch reads GPFGSGKT.

It belongs to the ATPase alpha/beta chains family. Has multiple subunits with at least A(3), B(3), C, D, E, F, H, I and proteolipid K(x).

Its subcellular location is the cell membrane. The enzyme catalyses ATP + H2O + 4 H(+)(in) = ADP + phosphate + 5 H(+)(out). Component of the A-type ATP synthase that produces ATP from ADP in the presence of a proton gradient across the membrane. The A chain is the catalytic subunit. The polypeptide is A-type ATP synthase subunit A (Methanococcoides burtonii (strain DSM 6242 / NBRC 107633 / OCM 468 / ACE-M)).